Consider the following 351-residue polypeptide: Mediator of RNA polymerase II transcription subunit 18 (351 aa).

Residues Gly153 to Ser231 form a disordered region. Over residues Asn163 to Asp204 the composition is skewed to basic and acidic residues. A compositionally biased stretch (acidic residues) spans Asn205–Asn216. The span at Pro217–Ser231 shows a compositional bias: polar residues.

It belongs to the Mediator complex subunit 18 family. As to quaternary structure, component of the Mediator complex.

Its subcellular location is the nucleus. Component of the Mediator complex, a coactivator involved in the regulated transcription of nearly all RNA polymerase II-dependent genes. Mediator functions as a bridge to convey information from gene-specific regulatory proteins to the basal RNA polymerase II transcription machinery. Mediator is recruited to promoters by direct interactions with regulatory proteins and serves as a scaffold for the assembly of a functional preinitiation complex with RNA polymerase II and the general transcription factors. In Candida albicans (strain SC5314 / ATCC MYA-2876) (Yeast), this protein is Mediator of RNA polymerase II transcription subunit 18 (SRB5).